The sequence spans 326 residues: Zinc finger protein 830 (326 aa).

Positions 1-11 (MAASRKGKAVK) are enriched in basic residues. The tract at residues 1–37 (MAASRKGKAVKAVKQEDLRRLMQETRRDSGRQKRVES) is disordered. Residues 13–36 (VKQEDLRRLMQETRRDSGRQKRVE) are compositionally biased toward basic and acidic residues. The C2H2-type zinc finger occupies 50–72 (CALCDAPVKNALLWQTHVLGKQH). The span at 83 to 108 (TAPAHTPAPAHTPAHTPAAASSSSST) shows a compositional bias: low complexity. Disordered regions lie at residues 83–214 (TAPA…PVRD), 237–257 (EMRQ…EEGR), and 276–309 (EELR…EEEE). The segment covering 180–195 (HSGSVSKAEQQESQEP) has biased composition (polar residues). Positions 224–295 (KDQLEREWEE…RSRRRSQRRE (72 aa)) form a coiled coil. Over residues 276-286 (EELRAKQETAR) the composition is skewed to basic and acidic residues. Residues 298 to 309 (PMQEEEPLEEEE) are compositionally biased toward acidic residues.

It is found in the nucleus. It localises to the chromosome. Its subcellular location is the nucleus speckle. In terms of biological role, may act as an important regulator of the cell cycle that participates in the maintenance of genome integrity. The sequence is that of Zinc finger protein 830 from Danio rerio (Zebrafish).